The sequence spans 244 residues: Putative nucleosome assembly protein C36B7.08c (244 aa).

Residues 199 to 244 (EAMTEEASDEDESVDLEEDEEEEDEEDEEGDEEKQEPPSKKSKKSN) are disordered. A compositionally biased stretch (acidic residues) spans 201-232 (MTEEASDEDESVDLEEDEEEEDEEDEEGDEEK). Serine 211 bears the Phosphoserine mark.

It belongs to the nucleosome assembly protein (NAP) family.

Its subcellular location is the nucleus. This is Putative nucleosome assembly protein C36B7.08c from Schizosaccharomyces pombe (strain 972 / ATCC 24843) (Fission yeast).